A 237-amino-acid polypeptide reads, in one-letter code: MPAVYKRILLKLSGEALMGDAQYGIDRTVVERIVVEIAGVLQLGVEVAIVVGGGNIFRGMKSAGDGMDRVTADYMGMLATTMNALALHDAMRRNGVVSRVQSALRIDQVVEPYIRGKALRYLNERKVVIFAAGTGNPFFTTDTAAALRGMEMNANIVLKATKVDGIYTSDPFENKDAQRFRNLTFDEAINKNLQVMDATALTLCRDQKLPINVFSIFKTGALKRVIMGEDEGTLVII.

11–14 (KLSG) contacts ATP. G53 provides a ligand contact to UMP. Residues G54 and R58 each coordinate ATP. Residues D73 and 134–141 (TGNPFFTT) each bind UMP. Residues T161, Y167, and D170 each contribute to the ATP site.

Belongs to the UMP kinase family. In terms of assembly, homohexamer.

Its subcellular location is the cytoplasm. It catalyses the reaction UMP + ATP = UDP + ADP. Its pathway is pyrimidine metabolism; CTP biosynthesis via de novo pathway; UDP from UMP (UMPK route): step 1/1. Inhibited by UTP. Its function is as follows. Catalyzes the reversible phosphorylation of UMP to UDP. The polypeptide is Uridylate kinase (Nitrosomonas eutropha (strain DSM 101675 / C91 / Nm57)).